The following is a 153-amino-acid chain: Aspartate carbamoyltransferase regulatory chain (153 aa).

4 residues coordinate Zn(2+): Cys-108, Cys-113, Cys-137, and Cys-140.

This sequence belongs to the PyrI family. Contains catalytic and regulatory chains. The cofactor is Zn(2+).

Involved in allosteric regulation of aspartate carbamoyltransferase. The sequence is that of Aspartate carbamoyltransferase regulatory chain from Methanosphaera stadtmanae (strain ATCC 43021 / DSM 3091 / JCM 11832 / MCB-3).